The chain runs to 63 residues: Large ribosomal subunit protein uL29 (63 aa).

It belongs to the universal ribosomal protein uL29 family.

The sequence is that of Large ribosomal subunit protein uL29 from Alteromonas mediterranea (strain DSM 17117 / CIP 110805 / LMG 28347 / Deep ecotype).